Here is a 122-residue protein sequence, read N- to C-terminus: Large ribosomal subunit protein uL14 (122 aa).

The protein belongs to the universal ribosomal protein uL14 family. Part of the 50S ribosomal subunit. Forms a cluster with proteins L3 and L19. In the 70S ribosome, L14 and L19 interact and together make contacts with the 16S rRNA in bridges B5 and B8.

Binds to 23S rRNA. Forms part of two intersubunit bridges in the 70S ribosome. The polypeptide is Large ribosomal subunit protein uL14 (Paracidovorax citrulli (strain AAC00-1) (Acidovorax citrulli)).